Consider the following 596-residue polypeptide: Chaperonin 60 subunit beta 2, chloroplastic (596 aa).

Residues 1–50 constitute a chloroplast transit peptide; that stretch reads MASTFTATSSLGSLLAPNAIKLSSATSISSSSFGRRHNVCVRRSRPAIVC. Phosphoserine is present on residues serine 97 and serine 474. The stretch at 388–489 forms a coiled coil; the sequence is TQEAVNKRVV…KDTLENDEEK (102 aa).

Belongs to the chaperonin (HSP60) family. Part of the Cpn60 complex composed of 7 alpha and 7 beta subunits. Can also form a complex composed of 14 beta subunits only. Both complexes show ATPase activity. The Cpn60 complex interacts with the Cpn10 complex. Interacts with RAB during heat stress.

The protein resides in the plastid. It is found in the chloroplast stroma. Functionally, involved in protein assisted folding. In Arabidopsis thaliana (Mouse-ear cress), this protein is Chaperonin 60 subunit beta 2, chloroplastic (CPN60B2).